Reading from the N-terminus, the 651-residue chain is Chaperone protein dnaK1 (651 aa).

T197 is modified (phosphothreonine; by autocatalysis).

It belongs to the heat shock protein 70 family.

Its function is as follows. Acts as a chaperone. The polypeptide is Chaperone protein dnaK1 (dnaK1) (Thermosynechococcus vestitus (strain NIES-2133 / IAM M-273 / BP-1)).